Reading from the N-terminus, the 291-residue chain is Protein-export membrane protein SecF (291 aa).

6 consecutive transmembrane segments (helical) span residues 19–39 (LVVIPLIILAVALLIIASWYV), 134–154 (LALGGVGVAFLGMSVLVFLMF), 156–176 (VFVPSIAVVVSAFSDIAISVA), 187–209 (LGTVAALLMIIGYSVDSDILLNN), 226–246 (MRTGVTMTLTSIIAMSVMAAV), and 256–278 (AAIGTVLVFGLIADLMNTYLLNL).

Belongs to the SecD/SecF family. SecF subfamily. In terms of assembly, part of the protein translocation apparatus. Forms a complex with SecD.

The protein localises to the cell membrane. Its function is as follows. Involved in protein export. This Haloquadratum walsbyi (strain DSM 16790 / HBSQ001) protein is Protein-export membrane protein SecF.